Here is a 145-residue protein sequence, read N- to C-terminus: Leptin (145 aa).

A disulfide bridge connects residues cysteine 95 and cysteine 145.

Belongs to the leptin family.

The protein resides in the secreted. Its function is as follows. Key player in the regulation of energy balance and body weight control. Once released into the circulation, has central and peripheral effects by binding LEPR, found in many tissues, which results in the activation of several major signaling pathways. This is Leptin (LEP) from Meleagris gallopavo (Wild turkey).